The chain runs to 272 residues: Hydroxyethylthiazole kinase (272 aa).

Methionine 46 contributes to the substrate binding site. ATP is bound by residues arginine 122 and threonine 168. Residue glycine 195 coordinates substrate.

Belongs to the Thz kinase family. Mg(2+) is required as a cofactor.

The catalysed reaction is 5-(2-hydroxyethyl)-4-methylthiazole + ATP = 4-methyl-5-(2-phosphooxyethyl)-thiazole + ADP + H(+). It functions in the pathway cofactor biosynthesis; thiamine diphosphate biosynthesis; 4-methyl-5-(2-phosphoethyl)-thiazole from 5-(2-hydroxyethyl)-4-methylthiazole: step 1/1. Functionally, catalyzes the phosphorylation of the hydroxyl group of 4-methyl-5-beta-hydroxyethylthiazole (THZ). The polypeptide is Hydroxyethylthiazole kinase (Alkaliphilus metalliredigens (strain QYMF)).